A 3470-amino-acid polypeptide reads, in one-letter code: Dynein axonemal heavy chain 5 (3470 aa).

A stem region spans residues Met-1–Thr-1938. The tract at residues Glu-899–Gly-918 is disordered. AAA regions lie at residues Tyr-1939–Thr-2161, Thr-2221–Leu-2440, Val-2547–Gly-2800, and Leu-2913–Ser-3167. ATP contacts are provided by residues Gly-1977–Thr-1984 and Gly-2259–Thr-2266. Coiled coils occupy residues Leu-3207–Glu-3241 and His-3434–Glu-3468.

The protein belongs to the dynein heavy chain family. Interacts with DNAL1. Consists of at least two heavy chains and a number of intermediate and light chains.

It localises to the cytoplasm. The protein localises to the cytoskeleton. It is found in the cilium axoneme. Force generating protein of respiratory cilia. Produces force towards the minus ends of microtubules. Dynein has ATPase activity; the force-producing power stroke is thought to occur on release of ADP. Required for structural and functional integrity of the cilia of ependymal cells lining the brain ventricles. The polypeptide is Dynein axonemal heavy chain 5 (Rattus norvegicus (Rat)).